The sequence spans 312 residues: Ribosomal RNA small subunit methyltransferase H (312 aa).

Residues 35–37, Asp-55, Phe-79, Asp-101, and Gln-108 contribute to the S-adenosyl-L-methionine site; that span reads GGH.

The protein belongs to the methyltransferase superfamily. RsmH family.

It is found in the cytoplasm. It carries out the reaction cytidine(1402) in 16S rRNA + S-adenosyl-L-methionine = N(4)-methylcytidine(1402) in 16S rRNA + S-adenosyl-L-homocysteine + H(+). Functionally, specifically methylates the N4 position of cytidine in position 1402 (C1402) of 16S rRNA. This Glaesserella parasuis serovar 5 (strain SH0165) (Haemophilus parasuis) protein is Ribosomal RNA small subunit methyltransferase H.